Consider the following 548-residue polypeptide: Aspergilol synthase AuAP450 (548 aa).

A helical membrane pass occupies residues 38–58 (PQLVITTLGALLLAAFYLLPS). Cys489 contributes to the heme binding site.

The protein belongs to the cytochrome P450 family. Heme is required as a cofactor.

Its subcellular location is the membrane. It functions in the pathway secondary metabolite biosynthesis; terpenoid biosynthesis. Its function is as follows. Cytochrome P450 monooxygenase; part of the gene cluster that mediates the biosynthesis of aspergiltriene A, aspergildienes A-D and aspergilols A-D. The bifunctional terpene synthase AuAS converts DMAPP and IPP into sesterterpenes. The C-terminal prenyltransferase (PT) domain of AuAS catalyzes formation of GFPP, whereas the N-terminal terpene cyclase (TC) domain catalyzes the cyclization of GFPP into 5 distinct sesterterpenes: aspergiltriene A, aspergildiene A, aspergildiene B, aspergildiene C and aspergildiene D. The cytochrome P450 monooxygenase AP450 then hydroxylates the aspergildienes A, B, C and D to yield the corresponding sesterterpene alcohols, aspergilols A-D. This chain is Aspergilol synthase AuAP450, found in Aspergillus ustus.